The chain runs to 81 residues: MSESEIFGKVKDIVAEQLSVDADKVTPEASFQNDLDADSLDVVEMVMALEEEFDIEIPDEAAEEILTVQAAVDFIAGKVKA.

The region spanning 4 to 79 (SEIFGKVKDI…AAVDFIAGKV (76 aa)) is the Carrier domain. Serine 39 carries the post-translational modification O-(pantetheine 4'-phosphoryl)serine.

The protein belongs to the acyl carrier protein (ACP) family. 4'-phosphopantetheine is transferred from CoA to a specific serine of apo-ACP by AcpS. This modification is essential for activity because fatty acids are bound in thioester linkage to the sulfhydryl of the prosthetic group.

Its subcellular location is the cytoplasm. It functions in the pathway lipid metabolism; fatty acid biosynthesis. Carrier of the growing fatty acid chain in fatty acid biosynthesis. This chain is Acyl carrier protein, found in Acaryochloris marina (strain MBIC 11017).